We begin with the raw amino-acid sequence, 154 residues long: MVLSDGEWQLVLNIWAKVEADVAGHGQDVLIRLFKGHPETLEKFDKFKHLKTEAEMKASEDLKKHGNTVLTALGGILKKKGHHEAELKPLAQSHATKHKIPIKYLEFISDAIIHVLHSRHPGDFGADAQGAMNKALELFRKDIAAKYKELGFQG.

The region spanning 2-148 is the Globin domain; sequence VLSDGEWQLV…FRKDIAAKYK (147 aa). Ser4 carries the post-translational modification Phosphoserine. His65 provides a ligand contact to nitrite. Residue His65 coordinates O2. Phosphothreonine is present on Thr68. His94 contacts heme b.

It belongs to the globin family. Monomeric.

Its subcellular location is the cytoplasm. It is found in the sarcoplasm. The catalysed reaction is Fe(III)-heme b-[protein] + nitric oxide + H2O = Fe(II)-heme b-[protein] + nitrite + 2 H(+). The enzyme catalyses H2O2 + AH2 = A + 2 H2O. Functionally, monomeric heme protein which primary function is to store oxygen and facilitate its diffusion within muscle tissues. Reversibly binds oxygen through a pentacoordinated heme iron and enables its timely and efficient release as needed during periods of heightened demand. Depending on the oxidative conditions of tissues and cells, and in addition to its ability to bind oxygen, it also has a nitrite reductase activity whereby it regulates the production of bioactive nitric oxide. Under stress conditions, like hypoxia and anoxia, it also protects cells against reactive oxygen species thanks to its pseudoperoxidase activity. The chain is Myoglobin from Balaena mysticetus (Bowhead whale).